A 394-amino-acid polypeptide reads, in one-letter code: Mannosyl-3-phosphoglycerate synthase (394 aa).

The protein belongs to the glycosyltransferase 2 family.

Its subcellular location is the cytoplasm. The catalysed reaction is (2R)-3-phosphoglycerate + GDP-alpha-D-mannose = 2-O-(alpha-D-mannosyl)-3-phosphoglycerate + GDP + H(+). It participates in carbohydrate biosynthesis; 2-(alpha-D-mannosyl)-D-glycerate biosynthesis; 2-(alpha-D-mannosyl)-D-glycerate from GDP-alpha-D-mannose (MPG route): step 1/2. Transfers a mannosyl group from GDP-mannose to phosphoglycerate to form mannosyl-3-phosphoglycerate (MPG). This is Mannosyl-3-phosphoglycerate synthase (mngA) from Pyrococcus abyssi (strain GE5 / Orsay).